We begin with the raw amino-acid sequence, 402 residues long: MYTMELRFIRGGVCAVDGVLAAGCREGKYGVGLIINRGSTAAAVFTSNRVRAEPVKLTERVIADGSISAIVANSGNANCFTGREGMDDARRMARKVAESLSMDESEVAVASTGVIGRRMPIDKIEFLIQSAAAQLENSEAASGALAEAIMTTDTFPKEVAVEFELETGEKARIGAVAKGSGMIAPNMATMLSFITTDVDASSSELTEALRVAVDESFNMLIVDGDESTNDMVIISSTRTSGRIDSNFREALVAVCRELARMMARDGEGVTKSFQVDVVNAGTHEDAKMAARAIAGSSLVKTAIFGADPNWGRIVAAAGYSGAEFDPEEISVTLESDSESVVIVDHGDILAFEGTEELETAERVMTSKEIRIIVDLAAGDESATAYGCDLTYDYVRINAEYTT.

Thr-151, Lys-178, Thr-189, Glu-267, Asn-397, and Thr-402 together coordinate substrate. Thr-189 (nucleophile) is an active-site residue.

Belongs to the ArgJ family. As to quaternary structure, heterotetramer of two alpha and two beta chains.

The protein localises to the cytoplasm. The enzyme catalyses N(2)-acetyl-L-ornithine + L-glutamate = N-acetyl-L-glutamate + L-ornithine. The protein operates within amino-acid biosynthesis; L-arginine biosynthesis; L-ornithine and N-acetyl-L-glutamate from L-glutamate and N(2)-acetyl-L-ornithine (cyclic): step 1/1. Catalyzes the transfer of the acetyl group from N(2)-acetylornithine to glutamate, forming N-acetylglutamate and L-ornithine. In Methanothermobacter thermautotrophicus (strain ATCC 29096 / DSM 1053 / JCM 10044 / NBRC 100330 / Delta H) (Methanobacterium thermoautotrophicum), this protein is Glutamate N-acetyltransferase.